Here is a 259-residue protein sequence, read N- to C-terminus: LOB domain-containing protein CRL1 (259 aa).

The 103-residue stretch at 6-108 (SPCGACKFLR…AQLASLKAAA (103 aa)) folds into the LOB domain.

This sequence belongs to the LOB domain-containing protein family. In terms of assembly, can form homodimers. In terms of tissue distribution, expressed in unelongating basal internodes, at the base of shoot in parenchyma cells adjacent to the peripheral vascular cylinder of the stem, and root pericycle cells. Expressed in lateral and adventitious root primordia, tiller primordia, vascular tissues, scutellum, and young pedicels.

The protein resides in the nucleus. Acts as a positive regulator of adventitious (crown) root formation by promoting its initiation. Acts as a positive regulator of lateral root formation. Regulated by the auxin response factor and transcriptional activator ARF23/ARF1. Involved in auxin-mediated cell dedifferentiation, and may promote the initial cell division in the pericycle cells adjacent to the peripheral vascular cylinder at the base of the stem. May act upstream of the gene regulatory network controlling adventitious root (crown) development. In Oryza sativa subsp. japonica (Rice), this protein is LOB domain-containing protein CRL1.